The primary structure comprises 455 residues: Carbamoyl phosphate synthase arginine-specific small chain (455 aa).

Residues 1-28 (MFARFCKAIPAKGRAFPSVNASIQSRLM) constitute a mitochondrion transit peptide. A Glutamine amidotransferase type-1 domain is found at 219 to 406 (HVAVIDCGVK…IDSVRKYKAN (188 aa)). The Nucleophile role is filled by C295. Active-site residues include H379 and E381.

It belongs to the CarA family. In terms of assembly, heterodimer composed of 2 chains; the small (or glutamine) chain promotes the hydrolysis of glutamine to ammonia, which is used by the large (or ammonia) chain to synthesize carbamoyl phosphate.

The protein localises to the mitochondrion matrix. It catalyses the reaction hydrogencarbonate + L-glutamine + 2 ATP + H2O = carbamoyl phosphate + L-glutamate + 2 ADP + phosphate + 2 H(+). The catalysed reaction is L-glutamine + H2O = L-glutamate + NH4(+). It participates in amino-acid biosynthesis; L-arginine biosynthesis; carbamoyl phosphate from bicarbonate: step 1/1. In terms of biological role, small subunit of the arginine-specific carbamoyl phosphate synthase (CPSase). CPSase catalyzes the formation of carbamoyl phosphate from the ammonia moiety of glutamine, carbonate, and phosphate donated by ATP, the first step of the arginine biosynthetic pathway. The small subunit (glutamine amidotransferase) binds and cleaves glutamine to supply the large subunit with the substrate ammonia. In Aspergillus clavatus (strain ATCC 1007 / CBS 513.65 / DSM 816 / NCTC 3887 / NRRL 1 / QM 1276 / 107), this protein is Carbamoyl phosphate synthase arginine-specific small chain (cpa1).